The primary structure comprises 125 residues: Small ribosomal subunit protein uS12 (125 aa).

Asp89 bears the 3-methylthioaspartic acid mark.

Belongs to the universal ribosomal protein uS12 family. Part of the 30S ribosomal subunit. Contacts proteins S8 and S17. May interact with IF1 in the 30S initiation complex.

Its function is as follows. With S4 and S5 plays an important role in translational accuracy. Interacts with and stabilizes bases of the 16S rRNA that are involved in tRNA selection in the A site and with the mRNA backbone. Located at the interface of the 30S and 50S subunits, it traverses the body of the 30S subunit contacting proteins on the other side and probably holding the rRNA structure together. The combined cluster of proteins S8, S12 and S17 appears to hold together the shoulder and platform of the 30S subunit. In Acidovorax sp. (strain JS42), this protein is Small ribosomal subunit protein uS12.